A 498-amino-acid chain; its full sequence is Fascin-3 (498 aa).

The protein belongs to the fascin family. As to expression, expressed in testis.

The protein localises to the cytoplasm. It localises to the cytoskeleton. Acts as an actin bundling protein. The polypeptide is Fascin-3 (Fscn3) (Mus musculus (Mouse)).